The chain runs to 284 residues: tRNA dimethylallyltransferase (284 aa).

An ATP-binding site is contributed by 6 to 13 (GPTASGKS). A substrate-binding site is contributed by 8–13 (TASGKS). Residues 31-34 (DSLS) form an interaction with substrate tRNA region.

Belongs to the IPP transferase family. In terms of assembly, monomer. It depends on Mg(2+) as a cofactor.

It catalyses the reaction adenosine(37) in tRNA + dimethylallyl diphosphate = N(6)-dimethylallyladenosine(37) in tRNA + diphosphate. In terms of biological role, catalyzes the transfer of a dimethylallyl group onto the adenine at position 37 in tRNAs that read codons beginning with uridine, leading to the formation of N6-(dimethylallyl)adenosine (i(6)A). In Nautilia profundicola (strain ATCC BAA-1463 / DSM 18972 / AmH), this protein is tRNA dimethylallyltransferase.